The primary structure comprises 116 residues: UPF0134 protein MPN_038 (116 aa).

It belongs to the UPF0134 family.

The sequence is that of UPF0134 protein MPN_038 from Mycoplasma pneumoniae (strain ATCC 29342 / M129 / Subtype 1) (Mycoplasmoides pneumoniae).